We begin with the raw amino-acid sequence, 259 residues long: Chaplin-C (259 aa).

The N-terminal stretch at 1 to 28 is a signal peptide; it reads MRQATRKGLMTMAAATGVIAAAGGAAHA. Residues 39-79 form the Chaplin 1 domain; the sequence is SPGVLSGNTVQAPVHVPVNVCGNTVDVVGVLNPAMGNACAN. Residues 84-112 show a composition bias toward gly residues; that stretch reads ASGGHGGHGGHGGYGDSGGEGGSHGGSHA. 2 disordered regions span residues 84 to 129 and 154 to 227; these read ASGG…NHVE and GNDC…ALAE. Positions 119–159 constitute a Chaplin 2 domain; that stretch reads SPGVGSGNHVEVPIDVPVNVCGNSIDVVGALNPTTGNDCGN. A compositionally biased stretch (low complexity) spans 180–189; sequence HNPGNPGNPD. The LPXTG sorting signal signature appears at 225 to 229; that stretch reads LAETG. Thr-228 is subject to Pentaglycyl murein peptidoglycan amidated threonine. A propeptide spans 229–259 (removed by sortase); it reads GSDLPLGLALPVGAGALLAGTVLYRKARASV.

Belongs to the chaplin family. Long chaplin subfamily.

The protein localises to the secreted. The protein resides in the cell wall. One of 8 partially redundant surface-active proteins required for efficient formation of aerial mycelium; the short chaplins assemble into a hydrophobic, amyloidal fibrillar surface layer that envelopes and protects aerial hyphae and spores, presumably anchored to the long chaplins. Chaplins have an overlapping function with the surface-active SapB peptide; chaplins are essential on minimal medium while on rich medium both chaplins and SapB are required for efficient aerial hyphae formation. A minimal chaplin strain capable of forming aerial mycelium/hyphae on minimal medium contains ChpC, ChpE and ChpH. The strain also has restored rodlet formation on the hyphae surface. The long chaplins (ChpA, ChpB, ChpC) are not absolutely necessary for short chaplin localization or rodlet formation, but probably play a role in initiating aerial hyphae development. Chaplins are also involved in cell attachment to a hydrophobic surface. The polypeptide is Chaplin-C (Streptomyces coelicolor (strain ATCC BAA-471 / A3(2) / M145)).